A 1086-amino-acid chain; its full sequence is 1,2-beta-oligoglucan phosphorylase (1086 aa).

Residue Asp-741 is the Proton donor of the active site.

This sequence belongs to the glycosyl hydrolase 94 family. Monomer.

The catalysed reaction is [(1-&gt;2)-beta-D-glucosyl](n) + phosphate = [(1-&gt;2)-beta-D-glucosyl](n-1) + alpha-D-glucose 1-phosphate. Catalyzes the reversible phosphorolysis of beta-(1-&gt;2)-D-glucans. The minimum length of the substrate for the phosphorolytic reaction is 3 D-glucose units. This Listeria innocua serovar 6a (strain ATCC BAA-680 / CLIP 11262) protein is 1,2-beta-oligoglucan phosphorylase.